The primary structure comprises 190 residues: dTTP/UTP pyrophosphatase (190 aa).

The active-site Proton acceptor is D68.

It belongs to the Maf family. YhdE subfamily. It depends on a divalent metal cation as a cofactor.

The protein localises to the cytoplasm. The catalysed reaction is dTTP + H2O = dTMP + diphosphate + H(+). The enzyme catalyses UTP + H2O = UMP + diphosphate + H(+). Its function is as follows. Nucleoside triphosphate pyrophosphatase that hydrolyzes dTTP and UTP. May have a dual role in cell division arrest and in preventing the incorporation of modified nucleotides into cellular nucleic acids. The protein is dTTP/UTP pyrophosphatase of Pyrococcus furiosus (strain ATCC 43587 / DSM 3638 / JCM 8422 / Vc1).